Here is a 259-residue protein sequence, read N- to C-terminus: Bisphosphoglycerate mutase (259 aa).

Position 2 is an N-acetylserine (S2). 2 N-linked (Glc) (glycation) lysine; in vitro glycosylation sites follow: K3 and K5. 10–17 (RHGEGAWN) serves as a coordination point for substrate. The Tele-phosphohistidine intermediate role is filled by H11. N-linked (Glc) (glycation) lysine; in vitro glycosylation is present at K18. 23-24 (CS) contacts substrate. The N-linked (Glc) (glycation) lysine; in vitro glycan is linked to K43. Substrate-binding positions include R62, 89 to 92 (ERHY), R100, and 116 to 117 (RR). Residue E89 is the Proton donor/acceptor of the active site. T122 carries the phosphothreonine modification. The N-linked (Glc) (glycation) lysine glycan is linked to K159. 189-190 (GN) lines the substrate pocket. N-linked (Glc) (glycation) lysine; in vitro glycosylation is present at K197.

The protein belongs to the phosphoglycerate mutase family. BPG-dependent PGAM subfamily. As to quaternary structure, homodimer. Glycation of Lys-159 in diabetic patients inactivates the enzyme. Expressed in red blood cells. Expressed in non-erythroid cells of the placenta; present in the syncytiotrophoblast layer of the placental villi at the feto-maternal interface (at protein level).

It carries out the reaction (2R)-3-phospho-glyceroyl phosphate = (2R)-2,3-bisphosphoglycerate + H(+). The enzyme catalyses (2R)-2-phosphoglycerate = (2R)-3-phosphoglycerate. Its activity is regulated as follows. At alkaline pH BPGM favors the synthase reaction; however, at lower pH the phosphatase reaction is dominant. Inhibited by citrate. Plays a major role in regulating hemoglobin oxygen affinity by controlling the levels of its allosteric effector 2,3-bisphosphoglycerate (2,3-BPG). Also exhibits mutase (EC 5.4.2.11) activity. The protein is Bisphosphoglycerate mutase (BPGM) of Homo sapiens (Human).